Here is a 96-residue protein sequence, read N- to C-terminus: U-stichotoxin-Hau2b (96 aa).

Residues 1-18 (MKPIFIVALLFSTCLVNA) form the signal peptide. 2 consecutive propeptides follow at residues 19–29 (KPSIDDAEMKR) and 30–33 (EPKP). 2 disulfide bridges follow: cysteine 40-cysteine 51 and cysteine 43-cysteine 58. 2 consecutive propeptides follow at residues 62–64 (RKR) and 65–68 (EPKP). Disulfide bonds link cysteine 75-cysteine 86 and cysteine 78-cysteine 93.

Belongs to the sea anemone BBH family.

The protein localises to the secreted. Its subcellular location is the nematocyst. Neurotoxin that paralyzes freshwater crabs at high concentration. In Heteractis aurora (Banded sea anemone), this protein is U-stichotoxin-Hau2b.